A 264-amino-acid chain; its full sequence is uncharacterized protein (264 aa).

An N-terminal signal peptide occupies residues 1-22 (MKSIKRIGLCISLLILIIFVTS). Cys-23 carries N-palmitoyl cysteine lipidation. Residue Cys-23 is the site of S-diacylglycerol cysteine attachment.

Belongs to the staphylococcal tandem lipoprotein family.

It localises to the cell membrane. This is an uncharacterized protein from Staphylococcus aureus (strain MRSA252).